Here is a 591-residue protein sequence, read N- to C-terminus: uncharacterized protein (591 aa).

An N-terminal signal peptide occupies residues 1–30; the sequence is MGKLLFGKLVFKKSLFLLSGMSSLAVFLTA. Cysteine 31 carries the N-palmitoyl cysteine lipid modification. A lipid anchor (S-diacylglycerol cysteine) is attached at cysteine 31. The segment covering 476–488 has biased composition (basic and acidic residues); the sequence is KKKLSEVATKKNE. 2 disordered regions span residues 476-497 and 510-535; these read KKKL…NGSN and SSSS…DNDG. The segment covering 510 to 523 has biased composition (low complexity); the sequence is SSSSTSMRNGSSDS.

It to T.pallidum TmpC.

The protein resides in the cell membrane. This is an uncharacterized protein from Mycoplasma genitalium (strain ATCC 33530 / DSM 19775 / NCTC 10195 / G37) (Mycoplasmoides genitalium).